The primary structure comprises 136 residues: Large ribosomal subunit protein uL16 (136 aa).

It belongs to the universal ribosomal protein uL16 family. In terms of assembly, part of the 50S ribosomal subunit.

In terms of biological role, binds 23S rRNA and is also seen to make contacts with the A and possibly P site tRNAs. In Mesomycoplasma hyopneumoniae (strain 232) (Mycoplasma hyopneumoniae), this protein is Large ribosomal subunit protein uL16.